Here is a 329-residue protein sequence, read N- to C-terminus: GTPase Obg (329 aa).

In terms of domain architecture, Obg spans 1–159 (MQFIDEAKIF…MWVWLHLKLL (159 aa)). The OBG-type G domain occupies 160-327 (SDVGLVGLPN…LLANILSELQ (168 aa)). GTP-binding positions include 166-173 (GLPNAGKS), 191-195 (FTTLT), 212-215 (DIPG), 279-282 (TKTD), and 308-310 (SSY). Serine 173 and threonine 193 together coordinate Mg(2+).

This sequence belongs to the TRAFAC class OBG-HflX-like GTPase superfamily. OBG GTPase family. In terms of assembly, monomer. The cofactor is Mg(2+).

Its subcellular location is the cytoplasm. An essential GTPase which binds GTP, GDP and possibly (p)ppGpp with moderate affinity, with high nucleotide exchange rates and a fairly low GTP hydrolysis rate. Plays a role in control of the cell cycle, stress response, ribosome biogenesis and in those bacteria that undergo differentiation, in morphogenesis control. This chain is GTPase Obg, found in Orientia tsutsugamushi (strain Ikeda) (Rickettsia tsutsugamushi).